We begin with the raw amino-acid sequence, 894 residues long: Mitogen-activated protein kinase kinase kinase kinase 3 (894 aa).

N-acetylmethionine is present on M1. The 258-residue stretch at F16–V273 folds into the Protein kinase domain. Residues I22–V30, K45, and K48 contribute to the ATP site. D136 functions as the Proton acceptor in the catalytic mechanism. S329 and S398 each carry phosphoserine. Positions A410–L536 are disordered. A compositionally biased stretch (pro residues) spans Q473 to K487. Residues N513 to P529 are compositionally biased toward basic and acidic residues. Residues P556–V867 enclose the CNH domain.

This sequence belongs to the protein kinase superfamily. STE Ser/Thr protein kinase family. STE20 subfamily. Interacts with SH3GL2. Interaction appears to regulate MAP4K3-mediated JNK activation. Mg(2+) serves as cofactor. Ubiquitously expressed in all tissues examined, with high levels in heart, brain, placenta, skeletal muscle, kidney and pancreas and lower levels in lung and liver.

The catalysed reaction is L-seryl-[protein] + ATP = O-phospho-L-seryl-[protein] + ADP + H(+). It carries out the reaction L-threonyl-[protein] + ATP = O-phospho-L-threonyl-[protein] + ADP + H(+). Its function is as follows. Serine/threonine kinase that plays a role in the response to environmental stress. Appears to act upstream of the JUN N-terminal pathway. Activator of the Hippo signaling pathway which plays a pivotal role in organ size control and tumor suppression by restricting proliferation and promoting apoptosis. MAP4Ks act in parallel to and are partially redundant with STK3/MST2 and STK4/MST2 in the phosphorylation and activation of LATS1/2, and establish MAP4Ks as components of the expanded Hippo pathway. This chain is Mitogen-activated protein kinase kinase kinase kinase 3, found in Homo sapiens (Human).